We begin with the raw amino-acid sequence, 89 residues long: Huwentoxin-IV (89 aa).

The signal sequence occupies residues 1–24 (MVNMKASMFLALAGLVLLFVVCYA). Positions 25–52 (SESEEKEFSNELLSSVLAVDDNSKGEER) are excised as a propeptide. Glu-53 bears the Pyrrolidone carboxylic acid (Glu); partial mark. 3 cysteine pairs are disulfide-bonded: Cys-54–Cys-69, Cys-61–Cys-76, and Cys-68–Cys-83. At Ile-87 the chain carries Isoleucine amide.

The protein belongs to the neurotoxin 10 (Hwtx-1) family. 22 (Htx-4) subfamily. Post-translationally, two forms of huwentoxin-IV exist in the venom of H.schmidti, a non-N-terminally modified (HwTx-IV) and a naturally modified peptide with pyroglutamic acid residue at position 53 (mHwTx-IV). mHwTx-IV shows no observable difference with the unmodified toxin when applied to the TTX-S sodium channel of DRG neuron (IC(50)~50 nM) or when tested on hNav1.7/SCN9A (IC(50)=30.8 nM). In addition, similarly to the unmodified toxin, mHwTx-IV has only a weak affinity for lipid membranes. However, in contrast with HwTx-IV, which dissociates at moderate and high depolarization voltages (50-200 mV), mHwTx-IV inhibition of TTX-sensitive sodium channels is not reversed by strong depolarization voltages. Expressed by the venom gland.

It is found in the secreted. This lethal neurotoxin (without cyclization at position 53) inhibits neuronal voltage-gated sodium channel Nav1.2/SCN2A (IC(50)=10-150 nM), rNav1.3/SCN3A (IC(50)=338 nM), Nav1.6/SCN8A (IC(50)=117 nM), and hNav1.7/SCN9A (IC(50)=9.6-33 nM). It inhibits activation of sodium channel by trapping the voltage sensor of domain II (DIIS4) in the closed configuration. The toxin neither shifts the Nav1.7/SCN9A activation curve nor modifies the slope factor. It does not slow fast-inactivation of hNav1.7/SCN9A channels. In addition, it has only a weak affinity for lipid membranes. This toxin also exists with a pyroglutamate at position 53. The sole difference observed between modified (mHwTx-IV) and unmodified toxins is that moderate or high depolarization voltages (200 mV) permit the unmodified toxin to dissociate, whereas mHwTx-IV toxin does not dissociate, even at high depolarization voltages. These data indicate that mHwTx-IV strongly binds to voltage sensor of sodium channel even at extreme depolarization voltages. This chain is Huwentoxin-IV, found in Cyriopagopus schmidti (Chinese bird spider).